We begin with the raw amino-acid sequence, 167 residues long: MRILAIDPAIRNTGYAVVEGDYRRARALDYGTLSIPRSVSQSGCLLAIKQHLGNLIDKWNPDEMAVERIIYVQSHQTAITMGAAKAAVVIAAAEAGLRIMEYSPKSVKLSVVGRGAAQKTQVAFMVRALLELRETPESDAADALAIGLTHLFSADPLKAHMMERKYI.

Catalysis depends on residues Asp7, Glu67, and Asp139. Asp7, Glu67, and Asp139 together coordinate Mg(2+).

It belongs to the RuvC family. In terms of assembly, homodimer which binds Holliday junction (HJ) DNA. The HJ becomes 2-fold symmetrical on binding to RuvC with unstacked arms; it has a different conformation from HJ DNA in complex with RuvA. In the full resolvosome a probable DNA-RuvA(4)-RuvB(12)-RuvC(2) complex forms which resolves the HJ. The cofactor is Mg(2+).

It localises to the cytoplasm. It carries out the reaction Endonucleolytic cleavage at a junction such as a reciprocal single-stranded crossover between two homologous DNA duplexes (Holliday junction).. Its function is as follows. The RuvA-RuvB-RuvC complex processes Holliday junction (HJ) DNA during genetic recombination and DNA repair. Endonuclease that resolves HJ intermediates. Cleaves cruciform DNA by making single-stranded nicks across the HJ at symmetrical positions within the homologous arms, yielding a 5'-phosphate and a 3'-hydroxyl group; requires a central core of homology in the junction. The consensus cleavage sequence is 5'-(A/T)TT(C/G)-3'. Cleavage occurs on the 3'-side of the TT dinucleotide at the point of strand exchange. HJ branch migration catalyzed by RuvA-RuvB allows RuvC to scan DNA until it finds its consensus sequence, where it cleaves and resolves the cruciform DNA. This Akkermansia muciniphila (strain ATCC BAA-835 / DSM 22959 / JCM 33894 / BCRC 81048 / CCUG 64013 / CIP 107961 / Muc) protein is Crossover junction endodeoxyribonuclease RuvC.